Consider the following 285-residue polypeptide: Prephenate dehydratase (285 aa).

The Prephenate dehydratase domain maps to 2-183 (KVGYLGPAAT…NHTRFVILSP (182 aa)). The ACT domain maps to 204-281 (MVMLPQDDQS…CKVRLLGAYQ (78 aa)).

It carries out the reaction prephenate + H(+) = 3-phenylpyruvate + CO2 + H2O. It participates in amino-acid biosynthesis; L-phenylalanine biosynthesis; phenylpyruvate from prephenate: step 1/1. The chain is Prephenate dehydratase (pheA) from Bacillus subtilis (strain 168).